Consider the following 248-residue polypeptide: Cell division protein ZapD (248 aa).

This sequence belongs to the ZapD family. In terms of assembly, interacts with FtsZ.

It is found in the cytoplasm. Cell division factor that enhances FtsZ-ring assembly. Directly interacts with FtsZ and promotes bundling of FtsZ protofilaments, with a reduction in FtsZ GTPase activity. This chain is Cell division protein ZapD, found in Aliivibrio fischeri (strain ATCC 700601 / ES114) (Vibrio fischeri).